We begin with the raw amino-acid sequence, 200 residues long: Large ribosomal subunit protein uL4 (200 aa).

The interval 42–65 is disordered; the sequence is TRAQKTRSEVSGGGAKPWRQKGTG.

Belongs to the universal ribosomal protein uL4 family. As to quaternary structure, part of the 50S ribosomal subunit.

One of the primary rRNA binding proteins, this protein initially binds near the 5'-end of the 23S rRNA. It is important during the early stages of 50S assembly. It makes multiple contacts with different domains of the 23S rRNA in the assembled 50S subunit and ribosome. Functionally, forms part of the polypeptide exit tunnel. This chain is Large ribosomal subunit protein uL4, found in Vibrio vulnificus (strain CMCP6).